A 152-amino-acid polypeptide reads, in one-letter code: Large ribosomal subunit protein bL9 (152 aa).

Belongs to the bacterial ribosomal protein bL9 family.

Binds to the 23S rRNA. The protein is Large ribosomal subunit protein bL9 of Prochlorococcus marinus (strain SARG / CCMP1375 / SS120).